Reading from the N-terminus, the 370-residue chain is Cytochrome b (370 aa).

The next 4 helical transmembrane spans lie at 25-45 (FGSM…FLAV), 69-90 (WMMQ…YIHI), 105-125 (WLSG…GYVL), and 170-190 (FFAL…LHVM). 2 residues coordinate heme b: histidine 75 and histidine 89. Heme b-binding residues include histidine 174 and histidine 188. A ubiquinone is bound at residue histidine 193. 4 helical membrane passes run 218–238 (YKDL…ISFY), 280–300 (LGGA…PFTH), 312–332 (FMQL…WTAT), and 339–358 (FTMI…ISNP).

The protein belongs to the cytochrome b family. The cytochrome bc1 complex contains 3 respiratory subunits (MT-CYB, CYC1 and UQCRFS1), 2 core proteins (UQCRC1 and UQCRC2) and probably 6 low-molecular weight proteins. Heme b serves as cofactor.

The protein resides in the mitochondrion inner membrane. Component of the ubiquinol-cytochrome c reductase complex (complex III or cytochrome b-c1 complex) that is part of the mitochondrial respiratory chain. The b-c1 complex mediates electron transfer from ubiquinol to cytochrome c. Contributes to the generation of a proton gradient across the mitochondrial membrane that is then used for ATP synthesis. In Corallus hortulanus enydris (Garden tree boa), this protein is Cytochrome b (MT-CYB).